We begin with the raw amino-acid sequence, 435 residues long: Serine--tRNA ligase (435 aa).

234–236 (TAE) serves as a coordination point for L-serine. An ATP-binding site is contributed by 265–267 (RRE). E288 lines the L-serine pocket. 352-355 (EISS) provides a ligand contact to ATP. S388 contributes to the L-serine binding site.

It belongs to the class-II aminoacyl-tRNA synthetase family. Type-1 seryl-tRNA synthetase subfamily. In terms of assembly, homodimer. The tRNA molecule binds across the dimer.

Its subcellular location is the cytoplasm. It catalyses the reaction tRNA(Ser) + L-serine + ATP = L-seryl-tRNA(Ser) + AMP + diphosphate + H(+). It carries out the reaction tRNA(Sec) + L-serine + ATP = L-seryl-tRNA(Sec) + AMP + diphosphate + H(+). It participates in aminoacyl-tRNA biosynthesis; selenocysteinyl-tRNA(Sec) biosynthesis; L-seryl-tRNA(Sec) from L-serine and tRNA(Sec): step 1/1. Its function is as follows. Catalyzes the attachment of serine to tRNA(Ser). Is also able to aminoacylate tRNA(Sec) with serine, to form the misacylated tRNA L-seryl-tRNA(Sec), which will be further converted into selenocysteinyl-tRNA(Sec). This is Serine--tRNA ligase from Synechococcus sp. (strain JA-2-3B'a(2-13)) (Cyanobacteria bacterium Yellowstone B-Prime).